A 177-amino-acid polypeptide reads, in one-letter code: Large ribosomal subunit protein uL10 (177 aa).

Belongs to the universal ribosomal protein uL10 family. As to quaternary structure, part of the ribosomal stalk of the 50S ribosomal subunit. The N-terminus interacts with L11 and the large rRNA to form the base of the stalk. The C-terminus forms an elongated spine to which L12 dimers bind in a sequential fashion forming a multimeric L10(L12)X complex.

Functionally, forms part of the ribosomal stalk, playing a central role in the interaction of the ribosome with GTP-bound translation factors. In Legionella pneumophila (strain Corby), this protein is Large ribosomal subunit protein uL10.